A 522-amino-acid chain; its full sequence is MKKNLISIDVFLTETRYQPNPTAIFNQICKKKSETLLLESAEINKKHHLESMMIIDAALKISFLNQIVIVEALTKNGVNLLSVFKSLLPKNVIILSDNNPLEIKFPILSMYLDEDQRLRSLSVFDAIRFLIKSVKNLSEFAPKSMFFGGLFSYDLITSFENLPILNTHQHCPDFCFYLSETLLILDHKNKTSIVQVTSFTNDNFEKKRLKDRLEILKNKLSKNLCPIKFDTLKNMKLWCNKTDEEYNKIIVNVKKFILQGEIFQVVPSRKFYLSCVNPLSSYEVLKKNNPSPYMFFMQDRKFTLFGASPESALKYDINSRQIEIYPIAGTRPRGRRSDGSLDLDLDNRIELEMRTNNKELAEHLMLVDLARNDLAKICEPGTRHVADLIRVDRYSHVMHLVSRVIGKLRFDLDFLHAYQACMNMGTLTGAPKVRAMELISEIEGEKRGSYGGAIGYFTGLGMLDTCIVIRSAYVENKIATIQAGAGIVLDSVPQLESDESKNKAKAVIQAIANSHSCQIEYL.

L-tryptophan is bound by residues Ser40 and 292–294 (PYM). Chorismate is bound at residue 329 to 330 (GT). Glu362 lines the Mg(2+) pocket. Chorismate-binding positions include Tyr450, Arg470, 484–486 (GAG), and Gly486. Glu499 is a Mg(2+) binding site.

Belongs to the anthranilate synthase component I family. In terms of assembly, heterotetramer consisting of two non-identical subunits: a beta subunit (TrpG) and a large alpha subunit (TrpE). It depends on Mg(2+) as a cofactor.

The enzyme catalyses chorismate + L-glutamine = anthranilate + pyruvate + L-glutamate + H(+). The protein operates within amino-acid biosynthesis; L-tryptophan biosynthesis; L-tryptophan from chorismate: step 1/5. Its activity is regulated as follows. Feedback inhibited by tryptophan. In terms of biological role, part of a heterotetrameric complex that catalyzes the two-step biosynthesis of anthranilate, an intermediate in the biosynthesis of L-tryptophan. In the first step, the glutamine-binding beta subunit (TrpG) of anthranilate synthase (AS) provides the glutamine amidotransferase activity which generates ammonia as a substrate that, along with chorismate, is used in the second step, catalyzed by the large alpha subunit of AS (TrpE) to produce anthranilate. In the absence of TrpG, TrpE can synthesize anthranilate directly from chorismate and high concentrations of ammonia. This is Anthranilate synthase component 1 (trpE) from Buchnera aphidicola subsp. Baizongia pistaciae (strain Bp).